The sequence spans 298 residues: Transcription factor bHLH114 (298 aa).

Positions 117 to 149 (LDHEIRNHKSSKEQITQDYKNLTSKRSEELEEN) form a coiled coil. The segment at 126–154 (SSKEQITQDYKNLTSKRSEELEENSDEYS) is disordered. The segment covering 129-140 (EQITQDYKNLTS) has biased composition (polar residues). A bHLH domain is found at 163–212 (LETLSPLPSFKVRKEKLGDRITALQQLVSPFGKTDTASVLNEAVEYIKFL).

Homodimer. In terms of tissue distribution, differentiating root endodermis.

The protein resides in the nucleus. The sequence is that of Transcription factor bHLH114 (BHLH114) from Arabidopsis thaliana (Mouse-ear cress).